Reading from the N-terminus, the 452-residue chain is MGRRKIEIEPIKDDRNRTVTFIKRKAGLFKKAHELSVLCQVDIAVIILGSNNTFYEYSSVDMSNLLNVHQNNTDLPHNIIEPSDYGDYVKKPRVVLNERKRRRRRATVLQPASHSGSCTVSSQDSSSVQNNGNLSAPLASNDAGNAGVSTPLVHCHGAISRSGSNHSDCARNSADYQMLQGGLNSGGSFHANDYKESVDQQHVANEAIHRNFMNKRIRPDTHLLLSESNHSNYHNFYPSPYENLPKPSLPASLVGNIPSFQSQFVQVIPANSNPMGKGFNGTGDSESFEAKQKIHPTVAISNTLEGPAPVQAMVHHLHQLNSNRGKLSGKPYLKLNIPKATNDACQRSPAMYSGTASPKTDVQATPNQMLASNMSSPLSRSKFLGFKNNDMDDLYHNGRCGSTYVNNKTFFLKPPIGRPPKFPKSPSSSIVVFPSSVASSTLKSTSSTNSPD.

In terms of domain architecture, MADS-box spans 3–57 (RRKIEIEPIKDDRNRTVTFIKRKAGLFKKAHELSVLCQVDIAVIILGSNNTFYEY). The segment at residues 58–87 (SSVDMSNLLNVHQNNTDLPHNIIEPSDYGD) is a DNA-binding region (mef2-type). The tract at residues 97 to 142 (NERKRRRRRATVLQPASHSGSCTVSSQDSSSVQNNGNLSAPLASND) is disordered. The span at 115-127 (SGSCTVSSQDSSS) shows a compositional bias: low complexity.

This sequence belongs to the MEF2 family. In terms of assembly, can heterodimerize with RLM1. Interacts with HOG1. In terms of processing, phosphorylated by HOG1.

The protein resides in the nucleus. Transcription factor that controls part of the HOG1-mediated osmostress responses. Binds to the DNA sequence 5'-ACTACTA[TA](4)TAG-3'. Does not appear to function in the MPK1 pathway. The polypeptide is Transcription factor SMP1 (SMP1) (Saccharomyces cerevisiae (strain ATCC 204508 / S288c) (Baker's yeast)).